The following is a 566-amino-acid chain: Transcription factor atf1 (566 aa).

Polar residues predominate over residues 1–42; sequence MSPSPVNTSTEPASVAAVSNGNATASSTQVPENNQSDSFAPP. Disordered stretches follow at residues 1–83, 96–117, 315–345, and 357–479; these read MSPS…FVGS, SFGS…PSLS, QQQT…PQAS, and SQQF…KSFL. A compositionally biased stretch (low complexity) spans 43–53; sequence SNNSQQNQQSS. Polar residues-rich tracts occupy residues 65-76 and 97-106; these read ANANPADQSDGV and FGSTASVGQG. Positions 107-117 are enriched in low complexity; that stretch reads NPSLNRNPSLS. Polar residues-rich tracts occupy residues 379 to 412 and 421 to 460; these read TLRQ…TANS and TDYS…YSKG. Basic and acidic residues predominate over residues 466 to 479; sequence SKNETDEEKRKSFL. A bZIP domain is found at 472-535; the sequence is EEKRKSFLER…VSLKTLLIAH (64 aa). Residues 474 to 503 form a basic motif region; it reads KRKSFLERNRQAALKCRQRKKQWLSNLQAK. The leucine-zipper stretch occupies residues 514–528; it reads LSAQVSALREEIVSL.

This sequence belongs to the bZIP family. Heterodimer of pcr1/mts2 and atf1/mts1. In terms of processing, phosphorylated by sty1/spc1.

The protein resides in the nucleus. Its function is as follows. Transcription factor required for sexual development and entry into stationary phase. Binds and activates CRE sites (cAMP-response elements, also known as M26 meiotic recombination hotspots). This chain is Transcription factor atf1 (atf1), found in Schizosaccharomyces pombe (strain 972 / ATCC 24843) (Fission yeast).